We begin with the raw amino-acid sequence, 37 residues long: MSDIN-like toxin proprotein 5 (37 aa).

Residues 1–10 (MSDINATRLP) constitute a propeptide that is removed on maturation. Positions 11-20 (LFFPPDFRPP) form a cross-link, cyclopeptide (Leu-Pro). The propeptide occupies 21 to 37 (CVGDADNFTLTRGENLC).

The protein belongs to the MSDIN fungal toxin family. In terms of processing, processed by the macrocyclase-peptidase enzyme POPB to yield a toxic cyclic decapeptide. POPB first removes 10 residues from the N-terminus. Conformational trapping of the remaining peptide forces the enzyme to release this intermediate rather than proceed to macrocyclization. The enzyme rebinds the remaining peptide in a different conformation and catalyzes macrocyclization of the N-terminal 10 residues. Expressed in basidiocarps.

Probable toxin that belongs to the MSDIN-like toxin family responsible for a large number of food poisoning cases and deaths. This is MSDIN-like toxin proprotein 5 from Amanita exitialis (Guangzhou destroying angel).